A 190-amino-acid polypeptide reads, in one-letter code: Ras-related protein RabF1 (190 aa).

15–22 (GDSGVGKT) is a binding site for GTP. The short motif at 37 to 44 (HITIGIEF) is the Effector region element. Residues 62 to 66 (DTAGE) and 119 to 122 (NKND) each bind GTP. At cysteine 187 the chain carries Cysteine methyl ester. Cysteine 187 carries S-geranylgeranyl cysteine lipidation. Residues 188-190 (IIN) constitute a propeptide, removed in mature form.

This sequence belongs to the small GTPase superfamily. Rab family.

The protein resides in the cell membrane. This chain is Ras-related protein RabF1 (rabF1-1), found in Dictyostelium discoideum (Social amoeba).